Here is a 1095-residue protein sequence, read N- to C-terminus: Solute carrier family 12 member 1 (1095 aa).

At 1 to 173 the chain is on the cytoplasmic side; it reads MSVSIPSNSV…EEDMTGVVKF (173 aa). The short motif at 16–19 is the RFXV motif element; that stretch reads RFQV. The tract at residues 29–49 is disordered; that stretch reads AAAVGDSADPPHYEETSFGDE. Phosphoserine occurs at positions 57 and 87. Residues T91, T96, T101, and T114 each carry the phosphothreonine modification. At S116 the chain carries Phosphoserine. S126 carries the post-translational modification Phosphoserine; by AMPK. S144 is modified (phosphoserine). The chain crosses the membrane as a helical span at residues 174–194; it reads GWVKGVLVRCMLNIWGVMLFI. Residues 195–197 lie on the Extracellular side of the membrane; that stretch reads RLS. A helical transmembrane segment spans residues 198-218; the sequence is WIVGEAGIGLGVLIILLSTMV. Over 219-255 the chain is Cytoplasmic; sequence TSITGLSTSAIATNGFVRGGGAYYLISRSLGPEFGGS. Residues 256–276 form a helical membrane-spanning segment; sequence IGLIFAFANAVAVAMYVVGFA. Residues 277–298 lie on the Extracellular side of the membrane; sequence ETVVDLLKESDSMMVDPTNDIR. The chain crosses the membrane as a helical span at residues 299 to 319; the sequence is IIGSITVVILLGISVAGMEWE. Over 320–323 the chain is Cytoplasmic; it reads AKAQ. Residues 324–344 traverse the membrane as a helical segment; it reads VILLVILLIAIANFFIGTVIP. The Extracellular segment spans residues 345-375; that stretch reads SNNEKKSRGFFNYQASIFAENFGPSFTKGEG. Residues 376 to 396 form a helical membrane-spanning segment; it reads FFSVFAIFFPAATGILAGANI. The Cytoplasmic segment spans residues 397–413; that stretch reads SGDLEDPQDAIPRGTML. A helical transmembrane segment spans residues 414–434; the sequence is AIFITTVAYIGVAICVAACVV. Topologically, residues 435–546 are extracellular; the sequence is RDATGSMNDT…NNEPLRGYFL (112 aa). N-linked (GlcNAc...) asparagine glycans are attached at residues N442 and N452. The next 2 membrane-spanning stretches (helical) occupy residues 547–567 and 568–588; these read TFVI…APII and SNFF…ASYA. Residues 589 to 605 lie on the Extracellular side of the membrane; the sequence is KSPGWRPAYGIYNMWVS. Residues 606 to 626 traverse the membrane as a helical segment; that stretch reads LFGAILCCAVMFVINWWAAVI. Residues 627-1095 lie on the Cytoplasmic side of the membrane; that stretch reads TYVIELFLYI…NHKNVLTFYS (469 aa).

This sequence belongs to the SLC12A transporter family. As to quaternary structure, when phosphorylated, interacts with PPP3CB. Post-translationally, phosphorylated at Ser-87, Thr-96 and Thr-101 by OXSR1/OSR1 and STK39/SPAK downstream of WNK kinases (WNK1, WNK2, WNK3 or WNK4), promoting its activity. Short-term cyclosporine administration increases SLC12A1 phosphorylation in kidney thick ascending limb, possibly through the inhibition of PPP3CB/calcineurin A beta phosphatase. As to expression, predominantly expressed in kidney (at protein level). In terms of tissue distribution, kidney-specific; most highly expressed in the outer stripe of outer medulla (at protein level). Kidney-specific; most highly expressed in the cortical thick ascending limb (at protein level). As to expression, kidney-specific; most highly expressed in the inner stripe of outer medulla (at protein level).

It is found in the apical cell membrane. It catalyses the reaction K(+)(out) + 2 chloride(out) + Na(+)(out) = K(+)(in) + 2 chloride(in) + Na(+)(in). With respect to regulation, activated following phosphorylation by OXSR1/OSR1 and STK39/SPAK downstream of WNK kinases (WNK1, WNK2, WNK3 or WNK4). Its activity is regulated as follows. Inhibited by mercury dichloride and diuretic drug bumetaide. Inactive in isotonic conditions. Its function is as follows. Renal sodium, potassium and chloride ion cotransporter that mediates the transepithelial NaCl reabsorption in the thick ascending limb and plays an essential role in the urinary concentration and volume regulation. Electrically silent transporter system. Functionally, high affinity, high capacity cotransporter for sodium, potassium and chloride ions, with a coupling ratio 1Na(+):1K(+):2Cl(-). In terms of biological role, high affinity, low capacity cotransporter for sodium, potassium and chloride ions, with a coupling ratio 1Na(+):1K(+):2Cl(-). Low affinity, low capacity cotransporter for sodium, potassium and chloride ions, with a coupling ratio 1Na(+):1K(+):2Cl(-). The polypeptide is Solute carrier family 12 member 1 (Slc12a1) (Mus musculus (Mouse)).